Here is a 160-residue protein sequence, read N- to C-terminus: SsrA-binding protein (160 aa).

It belongs to the SmpB family.

Its subcellular location is the cytoplasm. Functionally, required for rescue of stalled ribosomes mediated by trans-translation. Binds to transfer-messenger RNA (tmRNA), required for stable association of tmRNA with ribosomes. tmRNA and SmpB together mimic tRNA shape, replacing the anticodon stem-loop with SmpB. tmRNA is encoded by the ssrA gene; the 2 termini fold to resemble tRNA(Ala) and it encodes a 'tag peptide', a short internal open reading frame. During trans-translation Ala-aminoacylated tmRNA acts like a tRNA, entering the A-site of stalled ribosomes, displacing the stalled mRNA. The ribosome then switches to translate the ORF on the tmRNA; the nascent peptide is terminated with the 'tag peptide' encoded by the tmRNA and targeted for degradation. The ribosome is freed to recommence translation, which seems to be the essential function of trans-translation. The protein is SsrA-binding protein of Mycobacterium leprae (strain Br4923).